A 498-amino-acid polypeptide reads, in one-letter code: Glycerol kinase (498 aa).

An ADP-binding site is contributed by Thr12. 3 residues coordinate ATP: Thr12, Thr13, and Ser14. A sn-glycerol 3-phosphate-binding site is contributed by Thr12. ADP is bound at residue Arg16. Residues Arg82, Glu83, Tyr134, and Asp241 each contribute to the sn-glycerol 3-phosphate site. Residues Arg82, Glu83, Tyr134, Asp241, and Gln242 each coordinate glycerol. Positions 263 and 310 each coordinate ADP. The ATP site is built by Thr263, Gly310, Gln314, and Gly411. Gly411 and Asn415 together coordinate ADP.

Belongs to the FGGY kinase family.

It carries out the reaction glycerol + ATP = sn-glycerol 3-phosphate + ADP + H(+). It participates in polyol metabolism; glycerol degradation via glycerol kinase pathway; sn-glycerol 3-phosphate from glycerol: step 1/1. With respect to regulation, inhibited by fructose 1,6-bisphosphate (FBP). Key enzyme in the regulation of glycerol uptake and metabolism. Catalyzes the phosphorylation of glycerol to yield sn-glycerol 3-phosphate. This chain is Glycerol kinase, found in Janthinobacterium sp. (strain Marseille) (Minibacterium massiliensis).